Reading from the N-terminus, the 405-residue chain is Chalcone synthase (405 aa).

The active site involves Cys170.

This sequence belongs to the thiolase-like superfamily. Chalcone/stilbene synthases family.

The catalysed reaction is (E)-4-coumaroyl-CoA + 3 malonyl-CoA + 3 H(+) = 2',4,4',6'-tetrahydroxychalcone + 3 CO2 + 4 CoA. It functions in the pathway secondary metabolite biosynthesis; flavonoid biosynthesis. In terms of biological role, the primary product of this enzyme is 4,2',4',6'-tetrahydroxychalcone (also termed naringenin-chalcone or chalcone) which can under specific conditions spontaneously isomerize into naringenin. In Equisetum arvense (Field horsetail), this protein is Chalcone synthase (CHS).